The following is a 227-amino-acid chain: Cytidylate kinase (227 aa).

12 to 20 (GPSGAGKGT) is a binding site for ATP.

It belongs to the cytidylate kinase family. Type 1 subfamily.

The protein localises to the cytoplasm. The enzyme catalyses CMP + ATP = CDP + ADP. It catalyses the reaction dCMP + ATP = dCDP + ADP. The chain is Cytidylate kinase from Salmonella arizonae (strain ATCC BAA-731 / CDC346-86 / RSK2980).